We begin with the raw amino-acid sequence, 508 residues long: Phenylalanine--tRNA ligase alpha subunit (508 aa).

Ala-2 is subject to N-acetylalanine. Thr-190 is subject to Phosphothreonine. A phosphoserine mark is found at Ser-193 and Ser-301. Lys-311 bears the N6-acetyllysine mark. Residues Thr-329, 372 to 374, and Tyr-412 contribute to the L-phenylalanine site; that span reads QIE. Position 414 (Glu-414) interacts with Mg(2+). Phe-438 serves as a coordination point for L-phenylalanine.

This sequence belongs to the class-II aminoacyl-tRNA synthetase family. Phe-tRNA synthetase alpha subunit type 2 subfamily. As to quaternary structure, heterotetramer; dimer of two heterodimers formed by FARSA and FARSB.

Its subcellular location is the cytoplasm. It carries out the reaction tRNA(Phe) + L-phenylalanine + ATP = L-phenylalanyl-tRNA(Phe) + AMP + diphosphate + H(+). The polypeptide is Phenylalanine--tRNA ligase alpha subunit (FARSA) (Homo sapiens (Human)).